Consider the following 396-residue polypeptide: MTKRLFTSESVTEGHPDKICDQISDAVLDAIYEKDPQARVACETAVTTGMVMVMGEITTNCYVDIPKVVRNTIREIGYDRAKYGFDCDTCAVMTSIDEQSSDIAMGVDKALEAKVGEMSEEQVQAIGAGDQGMMFGFACDETPELMPMPIILAHKLTMKLSEVRKNGKVKYLRPDGKSQVTVEYDGDKPVRVDTVVISTQHGADVSHDTIEKDIMEHVIIPVIPRELLDEGTKYFINPTGRFVVGGPQGDSGLTGRKIIVDTYGGYARHGGGAFSGKDPTKVDRSAAYAARYVAKNIVASGIARKCEVQLAYAIGVAKPVSVLVDTFGTAVIPEEKISELVNKHFDLRPAAIINKLNLRRPIYRKTAAYGHFGRDDAEFSWEKTDVADALRKEAGL.

An ATP-binding site is contributed by His15. Asp17 contributes to the Mg(2+) binding site. K(+) is bound at residue Glu43. 2 residues coordinate L-methionine: Glu56 and Gln99. The segment at 99 to 109 is flexible loop; that stretch reads QSSDIAMGVDK. Residues 175 to 177, 241 to 242, Asp250, 256 to 257, Ala273, and Lys277 each bind ATP; these read DGK, RF, and RK. Residue Asp250 participates in L-methionine binding. Lys281 is an L-methionine binding site.

This sequence belongs to the AdoMet synthase family. As to quaternary structure, homotetramer; dimer of dimers. It depends on Mg(2+) as a cofactor. K(+) serves as cofactor.

Its subcellular location is the cytoplasm. The catalysed reaction is L-methionine + ATP + H2O = S-adenosyl-L-methionine + phosphate + diphosphate. It functions in the pathway amino-acid biosynthesis; S-adenosyl-L-methionine biosynthesis; S-adenosyl-L-methionine from L-methionine: step 1/1. Its function is as follows. Catalyzes the formation of S-adenosylmethionine (AdoMet) from methionine and ATP. The overall synthetic reaction is composed of two sequential steps, AdoMet formation and the subsequent tripolyphosphate hydrolysis which occurs prior to release of AdoMet from the enzyme. The sequence is that of S-adenosylmethionine synthase from Ruminiclostridium cellulolyticum (strain ATCC 35319 / DSM 5812 / JCM 6584 / H10) (Clostridium cellulolyticum).